Reading from the N-terminus, the 387-residue chain is Cystathionine beta-lyase (387 aa).

An N6-(pyridoxal phosphate)lysine modification is found at Lys204.

It belongs to the trans-sulfuration enzymes family. In terms of assembly, homotetramer. The cofactor is pyridoxal 5'-phosphate.

The protein localises to the cytoplasm. The enzyme catalyses L,L-cystathionine + H2O = L-homocysteine + pyruvate + NH4(+). It catalyses the reaction an S-substituted L-cysteine + H2O = a thiol + pyruvate + NH4(+). Its pathway is amino-acid biosynthesis; L-methionine biosynthesis via de novo pathway; L-homocysteine from L-cystathionine: step 1/1. In terms of biological role, catalyzes the cleavage of cystathionine to homocysteine, pyruvate and ammonia during methionine biosynthesis. This Coxiella burnetii (strain RSA 493 / Nine Mile phase I) protein is Cystathionine beta-lyase (metC).